We begin with the raw amino-acid sequence, 461 residues long: uncharacterized protein (461 aa).

Transmembrane regions (helical) follow at residues Gly13–Glu33, Ala54–Val74, Val81–Leu101, Gly120–Met140, Val170–Gly190, Tyr211–Phe231, Phe256–Ile276, Ile286–Val306, Ser314–Leu334, Phe349–Phe369, Thr377–Pro397, Ile399–Thr419, and Val439–Trp459.

The protein belongs to the SLC13A/DASS transporter (TC 2.A.47) family. NADC subfamily.

Its subcellular location is the cell membrane. This is an uncharacterized protein from Haemophilus influenzae (strain ATCC 51907 / DSM 11121 / KW20 / Rd).